A 1447-amino-acid chain; its full sequence is Gag-Pol polyprotein (1447 aa).

G2 carries the N-myristoyl glycine; by host lipid modification. Positions V7–L31 are interaction with Gp41. The segment at L8–R43 is interaction with host CALM1. The interval E12–I19 is interaction with host AP3D1. The segment at D14–H33 is interaction with membrane phosphatidylinositol 4,5-bisphosphate and RNA. The short motif at W16–R22 is the Nuclear export signal element. The Nuclear localization signal motif lies at K26 to K32. The tract at residues E73–S77 is interaction with membrane phosphatidylinositol 4,5-bisphosphate. The tract at residues E106 to V128 is disordered. Y132 is modified (phosphotyrosine; by host). The tract at residues N189–Q227 is interaction with human PPIA/CYPA and NUP153. A dimerization/Multimerization of capsid protein p24 region spans residues Y277–L363. R387 bears the Asymmetric dimethylarginine; in Nucleocapsid protein p7; by host PRMT6 mark. The CCHC-type 1 zinc finger occupies V390–A407. An Asymmetric dimethylarginine; in Nucleocapsid protein p7; by host PRMT6 modification is found at R409. The segment at K411–E428 adopts a CCHC-type 2 zinc-finger fold. Residues R446–Q493 form a disordered region. Residues S450 to P470 are compositionally biased toward polar residues. A dimerization of protease region spans residues P501 to L505. One can recognise a Peptidase A2 domain in the interval K520–L589. D525 serves as the catalytic For protease activity; shared with dimeric partner. Dimerization of protease stretches follow at residues G549–K555 and N588–P600. The Reverse transcriptase domain occupies E643 to L833. The Mg(2+) site is built by D709, D784, and D785. An RT 'primer grip' region spans residues F826–H834. The Tryptophan repeat motif signature appears at W997 to W1013. In terms of domain architecture, RNase H type-1 spans I1033–R1156. Mg(2+)-binding residues include D1042, E1077, D1097, and D1148. The Integrase-type zinc finger occupies D1162–Q1203. 4 residues coordinate Zn(2+): H1171, H1175, C1199, and C1202. Residues V1213–I1363 enclose the Integrase catalytic domain. Positions 1223, 1275, and 1311 each coordinate Mg(2+). Positions F1382–D1429 form a DNA-binding region, integrase-type.

Homotrimer; further assembles as hexamers of trimers. Interacts with gp41 (via C-terminus). Interacts with host CALM1; this interaction induces a conformational change in the Matrix protein, triggering exposure of the myristate group. Interacts with host AP3D1; this interaction allows the polyprotein trafficking to multivesicular bodies during virus assembly. Part of the pre-integration complex (PIC) which is composed of viral genome, matrix protein, Vpr and integrase. As to quaternary structure, homodimer; the homodimer further multimerizes as homohexamers or homopentamers. Interacts with human PPIA/CYPA; This interaction stabilizes the capsid. Interacts with human NUP153. Interacts with host PDZD8; this interaction stabilizes the capsid. Interacts with monkey TRIM5; this interaction destabilizes the capsid. In terms of assembly, homodimer, whose active site consists of two apposed aspartic acid residues. Heterodimer of p66 RT and p51 RT (RT p66/p51). Heterodimerization of RT is essential for DNA polymerase activity. The overall folding of the subdomains is similar in p66 RT and p51 RT but the spatial arrangements of the subdomains are dramatically different. As to quaternary structure, homotetramer; may further associate as a homohexadecamer. Part of the pre-integration complex (PIC) which is composed of viral genome, matrix protein, Vpr and integrase. Interacts with human SMARCB1/INI1 and human PSIP1/LEDGF isoform 1. Interacts with human KPNA3; this interaction might play a role in nuclear import of the pre-integration complex. Interacts with human NUP153; this interaction might play a role in nuclear import of the pre-integration complex. It depends on Mg(2+) as a cofactor. In terms of processing, specific enzymatic cleavages by the viral protease yield mature proteins. The protease is released by autocatalytic cleavage. The polyprotein is cleaved during and after budding, this process is termed maturation. Proteolytic cleavage of p66 RT removes the RNase H domain to yield the p51 RT subunit. Nucleocapsid protein p7 might be further cleaved after virus entry. Post-translationally, tyrosine phosphorylated presumably in the virion by a host kinase. Phosphorylation is apparently not a major regulator of membrane association. Phosphorylated possibly by host MAPK1; this phosphorylation is necessary for Pin1-mediated virion uncoating. In terms of processing, methylated by host PRMT6, impairing its function by reducing RNA annealing and the initiation of reverse transcription.

It localises to the host cell membrane. It is found in the host endosome. Its subcellular location is the host multivesicular body. The protein resides in the virion membrane. The protein localises to the host nucleus. It localises to the host cytoplasm. It is found in the virion. The catalysed reaction is Specific for a P1 residue that is hydrophobic, and P1' variable, but often Pro.. The enzyme catalyses 3'-end directed exonucleolytic cleavage of viral RNA-DNA hybrid.. It catalyses the reaction Endohydrolysis of RNA in RNA/DNA hybrids. Three different cleavage modes: 1. sequence-specific internal cleavage of RNA. Human immunodeficiency virus type 1 and Moloney murine leukemia virus enzymes prefer to cleave the RNA strand one nucleotide away from the RNA-DNA junction. 2. RNA 5'-end directed cleavage 13-19 nucleotides from the RNA end. 3. DNA 3'-end directed cleavage 15-20 nucleotides away from the primer terminus.. It carries out the reaction DNA(n) + a 2'-deoxyribonucleoside 5'-triphosphate = DNA(n+1) + diphosphate. With respect to regulation, protease: The viral protease is inhibited by many synthetic protease inhibitors (PIs), such as amprenavir, atazanavir, indinavir, loprinavir, nelfinavir, ritonavir and saquinavir. Use of protease inhibitors in tritherapy regimens permit more ambitious therapeutic strategies. Reverse transcriptase/ribonuclease H: RT can be inhibited either by nucleoside RT inhibitors (NRTIs) or by non nucleoside RT inhibitors (NNRTIs). NRTIs act as chain terminators, whereas NNRTIs inhibit DNA polymerization by binding a small hydrophobic pocket near the RT active site and inducing an allosteric change in this region. Classical NRTIs are abacavir, adefovir (PMEA), didanosine (ddI), lamivudine (3TC), stavudine (d4T), tenofovir (PMPA), zalcitabine (ddC), and zidovudine (AZT). Classical NNRTIs are atevirdine (BHAP U-87201E), delavirdine, efavirenz (DMP-266), emivirine (I-EBU), and nevirapine (BI-RG-587). The tritherapies used as a basic effective treatment of AIDS associate two NRTIs and one NNRTI. In terms of biological role, mediates, with Gag polyprotein, the essential events in virion assembly, including binding the plasma membrane, making the protein-protein interactions necessary to create spherical particles, recruiting the viral Env proteins, and packaging the genomic RNA via direct interactions with the RNA packaging sequence (Psi). Gag-Pol polyprotein may regulate its own translation, by the binding genomic RNA in the 5'-UTR. At low concentration, the polyprotein would promote translation, whereas at high concentration, the polyprotein would encapsidate genomic RNA and then shut off translation. Functionally, targets the polyprotein to the plasma membrane via a multipartite membrane-binding signal, that includes its myristoylated N-terminus. Matrix protein is part of the pre-integration complex. Implicated in the release from host cell mediated by Vpu. Binds to RNA. Its function is as follows. Forms the conical core that encapsulates the genomic RNA-nucleocapsid complex in the virion. Most core are conical, with only 7% tubular. The core is constituted by capsid protein hexamer subunits. The core is disassembled soon after virion entry. Host restriction factors such as TRIM5-alpha or TRIMCyp bind retroviral capsids and cause premature capsid disassembly, leading to blocks in reverse transcription. Capsid restriction by TRIM5 is one of the factors which restricts HIV-1 to the human species. Host PIN1 apparently facilitates the virion uncoating. On the other hand, interactions with PDZD8 or CYPA stabilize the capsid. Encapsulates and protects viral dimeric unspliced genomic RNA (gRNA). Binds these RNAs through its zinc fingers. Acts as a nucleic acid chaperone which is involved in rearangement of nucleic acid secondary structure during gRNA retrotranscription. Also facilitates template switch leading to recombination. As part of the polyprotein, participates in gRNA dimerization, packaging, tRNA incorporation and virion assembly. In terms of biological role, aspartyl protease that mediates proteolytic cleavages of Gag and Gag-Pol polyproteins during or shortly after the release of the virion from the plasma membrane. Cleavages take place as an ordered, step-wise cascade to yield mature proteins. This process is called maturation. Displays maximal activity during the budding process just prior to particle release from the cell. Also cleaves Nef and Vif, probably concomitantly with viral structural proteins on maturation of virus particles. Hydrolyzes host EIF4GI and PABP1 in order to shut off the capped cellular mRNA translation. The resulting inhibition of cellular protein synthesis serves to ensure maximal viral gene expression and to evade host immune response. Also mediates cleavage of host YTHDF3. Mediates cleavage of host CARD8, thereby activating the CARD8 inflammasome, leading to the clearance of latent HIV-1 in patient CD4(+) T-cells after viral reactivation; in contrast, HIV-1 can evade CARD8-sensing when its protease remains inactive in infected cells prior to viral budding. Functionally, multifunctional enzyme that converts the viral RNA genome into dsDNA in the cytoplasm, shortly after virus entry into the cell. This enzyme displays a DNA polymerase activity that can copy either DNA or RNA templates, and a ribonuclease H (RNase H) activity that cleaves the RNA strand of RNA-DNA heteroduplexes in a partially processive 3' to 5' endonucleasic mode. Conversion of viral genomic RNA into dsDNA requires many steps. A tRNA(3)-Lys binds to the primer-binding site (PBS) situated at the 5'-end of the viral RNA. RT uses the 3' end of the tRNA primer to perform a short round of RNA-dependent minus-strand DNA synthesis. The reading proceeds through the U5 region and ends after the repeated (R) region which is present at both ends of viral RNA. The portion of the RNA-DNA heteroduplex is digested by the RNase H, resulting in a ssDNA product attached to the tRNA primer. This ssDNA/tRNA hybridizes with the identical R region situated at the 3' end of viral RNA. This template exchange, known as minus-strand DNA strong stop transfer, can be either intra- or intermolecular. RT uses the 3' end of this newly synthesized short ssDNA to perform the RNA-dependent minus-strand DNA synthesis of the whole template. RNase H digests the RNA template except for two polypurine tracts (PPTs) situated at the 5'-end and near the center of the genome. It is not clear if both polymerase and RNase H activities are simultaneous. RNase H probably can proceed both in a polymerase-dependent (RNA cut into small fragments by the same RT performing DNA synthesis) and a polymerase-independent mode (cleavage of remaining RNA fragments by free RTs). Secondly, RT performs DNA-directed plus-strand DNA synthesis using the PPTs that have not been removed by RNase H as primers. PPTs and tRNA primers are then removed by RNase H. The 3' and 5' ssDNA PBS regions hybridize to form a circular dsDNA intermediate. Strand displacement synthesis by RT to the PBS and PPT ends produces a blunt ended, linear dsDNA copy of the viral genome that includes long terminal repeats (LTRs) at both ends. Its function is as follows. Catalyzes viral DNA integration into the host chromosome, by performing a series of DNA cutting and joining reactions. This enzyme activity takes place after virion entry into a cell and reverse transcription of the RNA genome in dsDNA. The first step in the integration process is 3' processing. This step requires a complex comprising the viral genome, matrix protein, Vpr and integrase. This complex is called the pre-integration complex (PIC). The integrase protein removes 2 nucleotides from each 3' end of the viral DNA, leaving recessed CA OH's at the 3' ends. In the second step, the PIC enters cell nucleus. This process is mediated through integrase and Vpr proteins, and allows the virus to infect a non dividing cell. This ability to enter the nucleus is specific of lentiviruses, other retroviruses cannot and rely on cell division to access cell chromosomes. In the third step, termed strand transfer, the integrase protein joins the previously processed 3' ends to the 5' ends of strands of target cellular DNA at the site of integration. The 5'-ends are produced by integrase-catalyzed staggered cuts, 5 bp apart. A Y-shaped, gapped, recombination intermediate results, with the 5'-ends of the viral DNA strands and the 3' ends of target DNA strands remaining unjoined, flanking a gap of 5 bp. The last step is viral DNA integration into host chromosome. This involves host DNA repair synthesis in which the 5 bp gaps between the unjoined strands are filled in and then ligated. Since this process occurs at both cuts flanking the HIV genome, a 5 bp duplication of host DNA is produced at the ends of HIV-1 integration. Alternatively, Integrase may catalyze the excision of viral DNA just after strand transfer, this is termed disintegration. This chain is Gag-Pol polyprotein (gag-pol), found in Human immunodeficiency virus type 1 group M subtype B (isolate BH10) (HIV-1).